We begin with the raw amino-acid sequence, 269 residues long: Ribosomal RNA small subunit methyltransferase A (269 aa).

Positions 18, 20, 45, 66, 91, and 112 each coordinate S-adenosyl-L-methionine.

Belongs to the class I-like SAM-binding methyltransferase superfamily. rRNA adenine N(6)-methyltransferase family. RsmA subfamily.

It is found in the cytoplasm. It carries out the reaction adenosine(1518)/adenosine(1519) in 16S rRNA + 4 S-adenosyl-L-methionine = N(6)-dimethyladenosine(1518)/N(6)-dimethyladenosine(1519) in 16S rRNA + 4 S-adenosyl-L-homocysteine + 4 H(+). In terms of biological role, specifically dimethylates two adjacent adenosines (A1518 and A1519) in the loop of a conserved hairpin near the 3'-end of 16S rRNA in the 30S particle. May play a critical role in biogenesis of 30S subunits. The chain is Ribosomal RNA small subunit methyltransferase A from Shewanella loihica (strain ATCC BAA-1088 / PV-4).